Consider the following 133-residue polypeptide: Ycf54-like protein (133 aa).

The protein belongs to the ycf54 family.

The protein is Ycf54-like protein of Synechocystis sp. (strain ATCC 27184 / PCC 6803 / Kazusa).